Here is a 405-residue protein sequence, read N- to C-terminus: Argininosuccinate synthase (405 aa).

ATP is bound by residues 10 to 18 (AYSGGLDTS) and Ala37. Positions 88 and 93 each coordinate L-citrulline. An ATP-binding site is contributed by Gly118. The L-aspartate site is built by Thr120, Asn124, and Asp125. Residue Asn124 participates in L-citrulline binding. Arg128, Ser179, Ser188, Glu264, and Tyr276 together coordinate L-citrulline.

Belongs to the argininosuccinate synthase family. Type 1 subfamily. In terms of assembly, homotetramer.

The protein resides in the cytoplasm. The enzyme catalyses L-citrulline + L-aspartate + ATP = 2-(N(omega)-L-arginino)succinate + AMP + diphosphate + H(+). It functions in the pathway amino-acid biosynthesis; L-arginine biosynthesis; L-arginine from L-ornithine and carbamoyl phosphate: step 2/3. This chain is Argininosuccinate synthase, found in Pseudomonas entomophila (strain L48).